Consider the following 228-residue polypeptide: 2,3-bisphosphoglycerate-dependent phosphoglycerate mutase (228 aa).

Residues 8–15, 21–22, Arg-60, 87–90, Lys-98, 114–115, and 183–184 each bind substrate; these read RHGQSEWN, TG, ERHY, RR, and GN. The active-site Tele-phosphohistidine intermediate is the His-9. Glu-87 serves as the catalytic Proton donor/acceptor.

Belongs to the phosphoglycerate mutase family. BPG-dependent PGAM subfamily.

It catalyses the reaction (2R)-2-phosphoglycerate = (2R)-3-phosphoglycerate. It functions in the pathway carbohydrate degradation; glycolysis; pyruvate from D-glyceraldehyde 3-phosphate: step 3/5. In terms of biological role, catalyzes the interconversion of 2-phosphoglycerate and 3-phosphoglycerate. This Staphylococcus epidermidis (strain ATCC 12228 / FDA PCI 1200) protein is 2,3-bisphosphoglycerate-dependent phosphoglycerate mutase.